The sequence spans 418 residues: Secernin-3 (418 aa).

Positions 1-5 are excised as a propeptide; that stretch reads MEPYS. Residue C6 is part of the active site. C6 bears the Glyoxylic acid (Cys); alternate mark. C6 bears the Pyruvic acid (Cys); alternate mark.

It belongs to the peptidase C69 family. Secernin subfamily.

Its function is as follows. Plays a role in thermal nociception. This chain is Secernin-3 (Scrn3), found in Mus musculus (Mouse).